A 686-amino-acid polypeptide reads, in one-letter code: Band 4.1-like protein 4A (686 aa).

The region spanning 11–299 (FYCEVLLLDE…EHHTFFRMPE (289 aa)) is the FERM domain. Ser304 is modified (phosphoserine). The disordered stretch occupies residues 331-686 (RDLSIQLPRP…IQASRLKTET (356 aa)). Positions 357 to 376 (AQTQPAESNSISRITANMEN) are enriched in polar residues. Phosphoserine occurs at positions 389, 393, and 402. Residues 418–428 (GPQSGLYNSPS) show a composition bias toward polar residues. Positions 479-489 (RCNTSSGSESE) are enriched in low complexity. Basic and acidic residues-rich tracts occupy residues 518 to 527 (VLRRQKEKNQ) and 547 to 561 (QAKEELWKHIQKELV). Residues 588–601 (IRHSHSPRSYRQYR) are compositionally biased toward basic residues. The span at 648–658 (GSKDSLMEEKP) shows a compositional bias: basic and acidic residues. Polar residues predominate over residues 673-686 (TIKTIQASRLKTET).

In terms of tissue distribution, expressed in many tissues. High levels of expression in brain, liver, thymus and peripheral blood leukocytes and low levels of expression in heart, kidney, testis and colon.

Its subcellular location is the cytoplasm. It is found in the cytoskeleton. The protein is Band 4.1-like protein 4A of Homo sapiens (Human).